Here is a 252-residue protein sequence, read N- to C-terminus: 5-oxoprolinase subunit A (252 aa).

This sequence belongs to the LamB/PxpA family. Forms a complex composed of PxpA, PxpB and PxpC.

The catalysed reaction is 5-oxo-L-proline + ATP + 2 H2O = L-glutamate + ADP + phosphate + H(+). In terms of biological role, catalyzes the cleavage of 5-oxoproline to form L-glutamate coupled to the hydrolysis of ATP to ADP and inorganic phosphate. This is 5-oxoprolinase subunit A from Bordetella pertussis (strain Tohama I / ATCC BAA-589 / NCTC 13251).